A 166-amino-acid chain; its full sequence is NAD(P)H-quinone oxidoreductase subunit I, chloroplastic (166 aa).

2 consecutive 4Fe-4S ferredoxin-type domains span residues 55–84 and 95–124; these read GRIH…VDWK and LNYS…MTEE. Residues Cys64, Cys67, Cys70, Cys74, Cys104, Cys107, Cys110, and Cys114 each contribute to the [4Fe-4S] cluster site.

The protein belongs to the complex I 23 kDa subunit family. NDH is composed of at least 16 different subunits, 5 of which are encoded in the nucleus. The cofactor is [4Fe-4S] cluster.

It localises to the plastid. Its subcellular location is the chloroplast thylakoid membrane. It catalyses the reaction a plastoquinone + NADH + (n+1) H(+)(in) = a plastoquinol + NAD(+) + n H(+)(out). The enzyme catalyses a plastoquinone + NADPH + (n+1) H(+)(in) = a plastoquinol + NADP(+) + n H(+)(out). Its function is as follows. NDH shuttles electrons from NAD(P)H:plastoquinone, via FMN and iron-sulfur (Fe-S) centers, to quinones in the photosynthetic chain and possibly in a chloroplast respiratory chain. The immediate electron acceptor for the enzyme in this species is believed to be plastoquinone. Couples the redox reaction to proton translocation, and thus conserves the redox energy in a proton gradient. This is NAD(P)H-quinone oxidoreductase subunit I, chloroplastic from Calea megacephala.